The following is a 263-amino-acid chain: Thiazole synthase (263 aa).

Lys-100 acts as the Schiff-base intermediate with DXP in catalysis. 1-deoxy-D-xylulose 5-phosphate contacts are provided by residues Gly-161, 187–188 (AG), and 209–210 (NT).

Belongs to the ThiG family. As to quaternary structure, homotetramer. Forms heterodimers with either ThiH or ThiS.

It localises to the cytoplasm. The catalysed reaction is [ThiS sulfur-carrier protein]-C-terminal-Gly-aminoethanethioate + 2-iminoacetate + 1-deoxy-D-xylulose 5-phosphate = [ThiS sulfur-carrier protein]-C-terminal Gly-Gly + 2-[(2R,5Z)-2-carboxy-4-methylthiazol-5(2H)-ylidene]ethyl phosphate + 2 H2O + H(+). It functions in the pathway cofactor biosynthesis; thiamine diphosphate biosynthesis. Catalyzes the rearrangement of 1-deoxy-D-xylulose 5-phosphate (DXP) to produce the thiazole phosphate moiety of thiamine. Sulfur is provided by the thiocarboxylate moiety of the carrier protein ThiS. In vitro, sulfur can be provided by H(2)S. This chain is Thiazole synthase, found in Shouchella clausii (strain KSM-K16) (Alkalihalobacillus clausii).